The chain runs to 129 residues: Small ribosomal subunit protein uS12 (129 aa).

The residue at position 89 (Asp89) is a 3-methylthioaspartic acid. The disordered stretch occupies residues Ser101–Lys129. The segment covering Lys116–Lys129 has biased composition (low complexity).

It belongs to the universal ribosomal protein uS12 family. As to quaternary structure, part of the 30S ribosomal subunit. Contacts proteins S8 and S17. May interact with IF1 in the 30S initiation complex.

With S4 and S5 plays an important role in translational accuracy. In terms of biological role, interacts with and stabilizes bases of the 16S rRNA that are involved in tRNA selection in the A site and with the mRNA backbone. Located at the interface of the 30S and 50S subunits, it traverses the body of the 30S subunit contacting proteins on the other side and probably holding the rRNA structure together. The combined cluster of proteins S8, S12 and S17 appears to hold together the shoulder and platform of the 30S subunit. The sequence is that of Small ribosomal subunit protein uS12 from Chlorobaculum parvum (strain DSM 263 / NCIMB 8327) (Chlorobium vibrioforme subsp. thiosulfatophilum).